Reading from the N-terminus, the 461-residue chain is V-type ATP synthase beta chain 1 (461 aa).

It belongs to the ATPase alpha/beta chains family.

In terms of biological role, produces ATP from ADP in the presence of a proton gradient across the membrane. The V-type beta chain is a regulatory subunit. The sequence is that of V-type ATP synthase beta chain 1 from Clostridium tetani (strain Massachusetts / E88).